The sequence spans 334 residues: N-acetyl-gamma-glutamyl-phosphate reductase (334 aa).

Cysteine 154 is a catalytic residue.

This sequence belongs to the NAGSA dehydrogenase family. Type 1 subfamily.

It localises to the cytoplasm. It catalyses the reaction N-acetyl-L-glutamate 5-semialdehyde + phosphate + NADP(+) = N-acetyl-L-glutamyl 5-phosphate + NADPH + H(+). The protein operates within amino-acid biosynthesis; L-arginine biosynthesis; N(2)-acetyl-L-ornithine from L-glutamate: step 3/4. Functionally, catalyzes the NADPH-dependent reduction of N-acetyl-5-glutamyl phosphate to yield N-acetyl-L-glutamate 5-semialdehyde. This is N-acetyl-gamma-glutamyl-phosphate reductase from Yersinia pseudotuberculosis serotype I (strain IP32953).